The primary structure comprises 479 residues: Glucan 1,3-beta-glucosidase 2 (479 aa).

Residues 1-21 (MMLFLIHLMALCCMFVAEVAC) form the signal peptide. N-linked (GlcNAc...) asparagine glycans are attached at residues asparagine 25, asparagine 29, asparagine 63, asparagine 104, asparagine 187, and asparagine 193. The active-site Proton donor is glutamate 227. Residues asparagine 254, asparagine 285, and asparagine 288 are each glycosylated (N-linked (GlcNAc...) asparagine). Catalysis depends on histidine 306, which acts as the Nucleophile. Asparagine 318 and asparagine 451 each carry an N-linked (GlcNAc...) asparagine glycan. Serine 456 carries GPI-anchor amidated serine lipidation. Positions 457–479 (SASAIASNKMTLLLAFLLVILVI) are cleaved as a propeptide — removed in mature form.

This sequence belongs to the glycosyl hydrolase 5 (cellulase A) family. In terms of processing, predicted to be a substrate for cleavage by KEX2.

It is found in the cell membrane. The protein localises to the secreted. It carries out the reaction Successive hydrolysis of beta-D-glucose units from the non-reducing ends of (1-&gt;3)-beta-D-glucans, releasing alpha-glucose.. Functionally, beta-glucanases participate in the metabolism of beta-glucan, the main structural component of the cell wall. EXG2 is not heavily involved in the exoglucanase function of the adhesion process. This chain is Glucan 1,3-beta-glucosidase 2 (EXG2), found in Candida albicans (strain SC5314 / ATCC MYA-2876) (Yeast).